A 185-amino-acid chain; its full sequence is Elongation factor P (185 aa).

This sequence belongs to the elongation factor P family.

Its subcellular location is the cytoplasm. The protein operates within protein biosynthesis; polypeptide chain elongation. Functionally, involved in peptide bond synthesis. Stimulates efficient translation and peptide-bond synthesis on native or reconstituted 70S ribosomes in vitro. Probably functions indirectly by altering the affinity of the ribosome for aminoacyl-tRNA, thus increasing their reactivity as acceptors for peptidyl transferase. The chain is Elongation factor P from Nitrosomonas eutropha (strain DSM 101675 / C91 / Nm57).